Consider the following 144-residue polypeptide: Large ribosomal subunit protein uL13 (144 aa).

Belongs to the universal ribosomal protein uL13 family. In terms of assembly, part of the 50S ribosomal subunit.

In terms of biological role, this protein is one of the early assembly proteins of the 50S ribosomal subunit, although it is not seen to bind rRNA by itself. It is important during the early stages of 50S assembly. This Nitrosomonas europaea (strain ATCC 19718 / CIP 103999 / KCTC 2705 / NBRC 14298) protein is Large ribosomal subunit protein uL13.